The chain runs to 768 residues: DNA replication licensing factor MCM3 homolog 3 (768 aa).

The region spanning 290–497 (TFDLLGNSLA…IDRQISEHVA (208 aa)) is the MCM domain. 340–347 (GDPSVAKS) contacts ATP. Residues 472–475 (SRFD) carry the Arginine finger motif. Residues 661–670 (EMKQQADHDA) are compositionally biased toward basic and acidic residues. Residues 661–690 (EMKQQADHDAGATGGTVDGHGSSGNDPMDV) are disordered. The span at 672 to 682 (ATGGTVDGHGS) shows a compositional bias: gly residues.

The protein belongs to the MCM family.

It localises to the nucleus. It catalyses the reaction ATP + H2O = ADP + phosphate + H(+). Acts as a factor that allows the DNA to undergo a single round of replication per cell cycle. Required for DNA replication and cell proliferation. May act as a component of the MCM complex which is the putative replicative helicase of the replication licensing system in eukaryotic cells. The chain is DNA replication licensing factor MCM3 homolog 3 (ROA3) from Zea mays (Maize).